Here is a 437-residue protein sequence, read N- to C-terminus: 5-hydroxytryptamine receptor 3B (437 aa).

The first 21 residues, 1 to 21 (MILLWSCLLVAVVGILGTATP), serve as a signal peptide directing secretion. At 22–238 (QPGNSSLHRL…VVIRRCPLAY (217 aa)) the chain is on the extracellular side. N-linked (GlcNAc...) asparagine glycosylation is found at N25, N92, and N134. Residues C151 and C165 are joined by a disulfide bond. Residues 239 to 259 (VVSLLIPSIFLMLVDLGSFYL) form a helical membrane-spanning segment. The Cytoplasmic portion of the chain corresponds to 260–264 (PPNCR). The helical transmembrane segment at 265-282 (ARIVFKTNVLVGYTVFRV) threads the bilayer. N283 carries an N-linked (GlcNAc...) asparagine glycan. Residues 283 to 292 (NMSDEVPRSA) are Extracellular-facing. Residues 293–313 (GCTPLIGVFFTVCMALLVLSL) traverse the membrane as a helical segment. The Cytoplasmic segment spans residues 314-410 (SKSILLIKFL…WLAILYRFDQ (97 aa)). The segment at 377–409 (FWFQFRSINNSLRTRDQIHQKEVEWLAILYRFD) is HA-stretch; determines single-channel conductance in 5-HT3 receptors. The chain crosses the membrane as a helical span at residues 411–431 (LLFRIYLAVLGLYTVTLCSLW). The Extracellular segment spans residues 432–437 (ALWSRM).

It belongs to the ligand-gated ion channel (TC 1.A.9) family. 5-hydroxytryptamine receptor (TC 1.A.9.2) subfamily. HTR3B sub-subfamily. Forms homopentameric as well as heteropentameric serotonin-activated cation-selective channel complexes with HTR3A. The homomeric complex is not functional. Heteropentameric complexes display properties which resemble that of neuronal serotonin-activated channels in vivo. Post-translationally, N-glycosylation is required for membrane localization.

The protein localises to the postsynaptic cell membrane. It localises to the cell membrane. It carries out the reaction Na(+)(in) = Na(+)(out). The catalysed reaction is K(+)(in) = K(+)(out). The enzyme catalyses Ca(2+)(in) = Ca(2+)(out). In terms of biological role, forms serotonin (5-hydroxytryptamine/5-HT3)-activated cation-selective channel complexes, which when activated cause fast, depolarizing responses in neurons. This is 5-hydroxytryptamine receptor 3B from Mus musculus (Mouse).